A 676-amino-acid chain; its full sequence is SPARC-like protein 1 (676 aa).

The signal sequence occupies residues Met1–Thr16. The span at Glu35–Met44 shows a compositional bias: basic and acidic residues. 3 disordered regions span residues Glu35–Arg151, Asn173–Arg369, and Ser385–Thr437. Polar residues predominate over residues Lys95–Ser108. Asn182 carries N-linked (GlcNAc...) asparagine glycosylation. Acidic residues predominate over residues Ser184–Asp202. Composition is skewed to basic and acidic residues over residues Glu249–Lys266 and Asn273–Phe291. A compositionally biased stretch (acidic residues) spans Asn312–Leu328. Asn318 is a glycosylation site (N-linked (GlcNAc...) asparagine). The segment covering Ser385 to Pro394 has biased composition (basic and acidic residues). Asn396 is a glycosylation site (N-linked (GlcNAc...) asparagine). The segment covering Ser397–Ser408 has biased composition (low complexity). Asn413 carries N-linked (GlcNAc...) asparagine glycosylation. The segment covering Thr415–Ala433 has biased composition (basic and acidic residues). N-linked (GlcNAc...) asparagine glycosylation is present at Asn435. Residues Leu444 to Cys466 enclose the Follistatin-like domain. Intrachain disulfides connect Cys445/Cys456, Cys450/Cys466, Cys468/Cys502, Cys474/Cys495, Cys484/Cys521, Cys527/Cys638, and Cys646/Cys662. One can recognise a Kazal-like domain in the interval Gly462 to His523. Residue Asn488 is glycosylated (N-linked (GlcNAc...) asparagine). In terms of domain architecture, EF-hand spans Pro634–Asp669. Asp647, Asp649, Asp651, and Glu658 together coordinate Ca(2+).

The protein belongs to the SPARC family. As to expression, glial (Mueller) cells of the neuroretina.

It localises to the secreted. Its subcellular location is the extracellular space. It is found in the extracellular matrix. Its function is as follows. Could play a role in the late stage of neuroretina morphogenesis. The sequence is that of SPARC-like protein 1 (SPARCL1) from Coturnix japonica (Japanese quail).